Reading from the N-terminus, the 451-residue chain is Cyclin-dependent kinase 18 (451 aa).

The tract at residues 39–61 (RNEDGRDEPGQLSPGVQYQQRQN) is disordered. At serine 51 the chain carries Phosphoserine. A compositionally biased stretch (polar residues) spans 52–61 (PGVQYQQRQN). A phosphoserine mark is found at serine 66 and serine 109. The 282-residue stretch at 121–402 (YVKLDKLGEG…AEAALSHPYF (282 aa)) folds into the Protein kinase domain. ATP-binding positions include 127–135 (LGEGTYATV) and lysine 150. The active-site Proton acceptor is aspartate 242. Serine 417 and serine 420 each carry phosphoserine.

This sequence belongs to the protein kinase superfamily. CMGC Ser/Thr protein kinase family. CDC2/CDKX subfamily. In brain, kidney, intestine and at a much lower level, in fetal tissues.

It catalyses the reaction L-seryl-[protein] + ATP = O-phospho-L-seryl-[protein] + ADP + H(+). It carries out the reaction L-threonyl-[protein] + ATP = O-phospho-L-threonyl-[protein] + ADP + H(+). Its function is as follows. May play a role in signal transduction cascades in terminally differentiated cells. The polypeptide is Cyclin-dependent kinase 18 (Cdk18) (Rattus norvegicus (Rat)).